Here is an 88-residue protein sequence, read N- to C-terminus: Kunitz-type U15-theraphotoxin-Hhn1h (88 aa).

The N-terminal stretch at 1 to 27 is a signal peptide; that stretch reads MGTARFLRAVLLLSVLLMVTFPALLSA. Positions 28 to 33 are excised as a propeptide; that stretch reads EHHDGR. A BPTI/Kunitz inhibitor domain is found at 37–85; the sequence is CRLPSGSGDCLRFFEMWYFDGTTCTKFVYGGYGGNDNRFPTEKACMKRC. Disulfide bonds link Cys-37-Cys-85 and Cys-60-Cys-81.

The protein belongs to the venom Kunitz-type family. 03 (sub-Kunitz) subfamily. Expressed by the venom gland.

It localises to the secreted. Functionally, serine protease inhibitor that inhibits trypsin at a molar ratio of 1:1. This Cyriopagopus hainanus (Chinese bird spider) protein is Kunitz-type U15-theraphotoxin-Hhn1h.